The following is a 95-amino-acid chain: MKITKAEVEHVALLARLELTEQEAETFTGQMDAILAYVDKLNELDTDGIVPTAHAVPMENAFRADEVTPSIGIENALGNAPKRAESFFRVPKVIE.

Belongs to the GatC family. As to quaternary structure, heterotrimer of A, B and C subunits.

It catalyses the reaction L-glutamyl-tRNA(Gln) + L-glutamine + ATP + H2O = L-glutaminyl-tRNA(Gln) + L-glutamate + ADP + phosphate + H(+). It carries out the reaction L-aspartyl-tRNA(Asn) + L-glutamine + ATP + H2O = L-asparaginyl-tRNA(Asn) + L-glutamate + ADP + phosphate + 2 H(+). Allows the formation of correctly charged Asn-tRNA(Asn) or Gln-tRNA(Gln) through the transamidation of misacylated Asp-tRNA(Asn) or Glu-tRNA(Gln) in organisms which lack either or both of asparaginyl-tRNA or glutaminyl-tRNA synthetases. The reaction takes place in the presence of glutamine and ATP through an activated phospho-Asp-tRNA(Asn) or phospho-Glu-tRNA(Gln). This chain is Aspartyl/glutamyl-tRNA(Asn/Gln) amidotransferase subunit C, found in Geotalea uraniireducens (strain Rf4) (Geobacter uraniireducens).